The primary structure comprises 190 residues: Threonylcarbamoyl-AMP synthase (190 aa).

The region spanning 7–190 is the YrdC-like domain; sequence IGSIAAAVDL…ALTGELFRQG (184 aa).

This sequence belongs to the SUA5 family. TsaC subfamily.

The protein localises to the cytoplasm. It catalyses the reaction L-threonine + hydrogencarbonate + ATP = L-threonylcarbamoyladenylate + diphosphate + H2O. Its function is as follows. Required for the formation of a threonylcarbamoyl group on adenosine at position 37 (t(6)A37) in tRNAs that read codons beginning with adenine. Catalyzes the conversion of L-threonine, HCO(3)(-)/CO(2) and ATP to give threonylcarbamoyl-AMP (TC-AMP) as the acyladenylate intermediate, with the release of diphosphate. The sequence is that of Threonylcarbamoyl-AMP synthase from Salmonella typhimurium (strain LT2 / SGSC1412 / ATCC 700720).